An 834-amino-acid chain; its full sequence is DNA gyrase subunit A (834 aa).

The Topo IIA-type catalytic domain occupies 53 to 520 (LPDVRDGLKP…NDTEIDEEDL (468 aa)). Tyr-141 serves as the catalytic O-(5'-phospho-DNA)-tyrosine intermediate. The short motif at 547 to 553 (QGRGGVG) is the GyrA-box element.

This sequence belongs to the type II topoisomerase GyrA/ParC subunit family. Heterotetramer, composed of two GyrA and two GyrB chains. In the heterotetramer, GyrA contains the active site tyrosine that forms a transient covalent intermediate with DNA, while GyrB binds cofactors and catalyzes ATP hydrolysis.

Its subcellular location is the cytoplasm. The catalysed reaction is ATP-dependent breakage, passage and rejoining of double-stranded DNA.. A type II topoisomerase that negatively supercoils closed circular double-stranded (ds) DNA in an ATP-dependent manner to modulate DNA topology and maintain chromosomes in an underwound state. Negative supercoiling favors strand separation, and DNA replication, transcription, recombination and repair, all of which involve strand separation. Also able to catalyze the interconversion of other topological isomers of dsDNA rings, including catenanes and knotted rings. Type II topoisomerases break and join 2 DNA strands simultaneously in an ATP-dependent manner. The protein is DNA gyrase subunit A of Brachyspira hyodysenteriae (strain ATCC 49526 / WA1).